The following is a 432-amino-acid chain: Alpha-2 adrenergic receptor (432 aa).

Topologically, residues 1 to 32 (MDPLNATGMDAFTAIHLNASWSADSGYSLAAI) are extracellular. 2 N-linked (GlcNAc...) asparagine glycosylation sites follow: asparagine 5 and asparagine 18. Residues 33–57 (ASIAALVSFLILFTVVGNILVVIAV) form a helical membrane-spanning segment. At 58–69 (LTSRALKAPQNL) the chain is on the cytoplasmic side. The helical transmembrane segment at 70–95 (FLVSLATADILVATLVMPFSLANELM) threads the bilayer. At 96-105 (GYWYFGKVWC) the chain is on the extracellular side. Cysteines 105 and 183 form a disulfide. A helical membrane pass occupies residues 106 to 128 (GIYLALDVLFCTSSIVHLCAISL). The Cytoplasmic portion of the chain corresponds to 129–149 (DRYWSVTQAVEYNLKRTPKRV). The chain crosses the membrane as a helical span at residues 150–172 (KCIIVIVWLISAFISSPPLLSID). The Extracellular portion of the chain corresponds to 173–188 (SNNYISSQPQCMLNDD). A helical transmembrane segment spans residues 189 to 212 (TWYILSSSMASFFAPCLIMILVYI). Over 213–356 (RIYQVAKTRT…QAREKRFTFV (144 aa)) the chain is Cytoplasmic. A disordered region spans residues 222–319 (TRSMSGKEPR…SISKQSARIS (98 aa)). 2 stretches are compositionally biased toward polar residues: residues 235–246 (VTQTENGLNKAN) and 265–275 (SQRTVTIGQQT). Residues 288 to 300 (GKGHKPQRQDSQR) show a composition bias toward basic and acidic residues. Residues 309–319 (SSISKQSARIS) show a composition bias toward polar residues. A helical transmembrane segment spans residues 357–380 (LAVVMGVFVVCWFPFFFSYSLHAV). The Extracellular segment spans residues 381 to 393 (CRDYCKIPDTLFK). The helical transmembrane segment at 394–413 (FFWIGYCNSSLNPAIYTIFN) threads the bilayer. The Cytoplasmic segment spans residues 414–432 (RDFRRAFQKILCKSWKKSF).

This sequence belongs to the G-protein coupled receptor 1 family.

Its subcellular location is the cell membrane. Alpha-2 adrenergic receptors mediate the catecholamine-induced inhibition of adenylate cyclase through the action of G proteins. The protein is Alpha-2 adrenergic receptor of Labrus ossifagus (Cuckoo wrasse).